We begin with the raw amino-acid sequence, 140 residues long: ATP synthase epsilon chain (140 aa).

Belongs to the ATPase epsilon chain family. F-type ATPases have 2 components, CF(1) - the catalytic core - and CF(0) - the membrane proton channel. CF(1) has five subunits: alpha(3), beta(3), gamma(1), delta(1), epsilon(1). CF(0) has three main subunits: a, b and c.

It is found in the cell inner membrane. Functionally, produces ATP from ADP in the presence of a proton gradient across the membrane. The sequence is that of ATP synthase epsilon chain from Colwellia psychrerythraea (strain 34H / ATCC BAA-681) (Vibrio psychroerythus).